The sequence spans 192 residues: Probable GTP-binding protein EngB (192 aa).

The EngB-type G domain maps to 22–192; the sequence is SLPEIVFVGR…LLEQLENYTG (171 aa). Residues 30-37, 57-61, 75-78, 142-145, and 172-174 contribute to the GTP site; these read GRSNVGKS, GKTQL, DLPG, TKYD, and YSA. Positions 37 and 59 each coordinate Mg(2+).

This sequence belongs to the TRAFAC class TrmE-Era-EngA-EngB-Septin-like GTPase superfamily. EngB GTPase family. Mg(2+) is required as a cofactor.

Its function is as follows. Necessary for normal cell division and for the maintenance of normal septation. This chain is Probable GTP-binding protein EngB, found in Prosthecochloris aestuarii (strain DSM 271 / SK 413).